The chain runs to 300 residues: Beta-lactamase (300 aa).

A signal peptide spans 1-29 (MTMFKTTFRQTATIAVSLISLLVSPMLWA). The active-site Acyl-ester intermediate is the S75. Residue 239 to 241 (KTG) coordinates substrate.

The protein belongs to the class-A beta-lactamase family. In terms of assembly, monomer.

It carries out the reaction a beta-lactam + H2O = a substituted beta-amino acid. Its function is as follows. Hydrolyzes broad-spectrum beta-lactam antibiotics. Active against cephalosporins such as cefuroxime and cefotaxime. The chain is Beta-lactamase (blaB) from Proteus vulgaris.